Here is a 335-residue protein sequence, read N- to C-terminus: MGKNIKIAFKHVSKEYDLYQNKSDKIKGLFMPKSQKMQSFWALRDVSFDIHDGETVGLIGINGSGKSTISSIMSGVIPPTQGEVVINGETSLIAIAVGLKGPLTGYENIRLKLLMHGMKSSQINKLMPSIIEFADIGDFINQPIKNYSSGMRSRLGFAISVHTNPDILVIDEALSVGDQTFYEKCVNKINEFKARGKTIVFVSHSLGQVKSLCDRIIWMHHGEIREMGEAKEVAQKYDEFVKWFNKQPNDYKKKYQKEHKEHQKAPQKKVYPNPNANKYRLTLFDKFLLTALIVLTILFGTLVATGKSFKGLISETSTNQVEQIAYVDNNEITIR.

An ABC transporter domain is found at I26–K246. G60–S67 is an ATP binding site.

This sequence belongs to the ABC transporter superfamily. Teichoic acids exporter (TC 3.A.1.104.1) family. The complex is composed of two ATP-binding proteins (TagH) and two transmembrane proteins (TagG).

Its subcellular location is the cell membrane. The catalysed reaction is ATP + H2O + teichoic acidSide 1 = ADP + phosphate + teichoic acidSide 2.. In terms of biological role, part of the ABC transporter complex TagGH involved in teichoic acids export. Responsible for energy coupling to the transport system. The sequence is that of Teichoic acids export ATP-binding protein TagH from Listeria innocua serovar 6a (strain ATCC BAA-680 / CLIP 11262).